Reading from the N-terminus, the 668-residue chain is DNA ligase (668 aa).

Residues 34–38, 83–84, and glutamate 113 each bind NAD(+); these read DAEYD and SL. Residue lysine 115 is the N6-AMP-lysine intermediate of the active site. The NAD(+) site is built by arginine 136, glutamate 170, lysine 286, and lysine 310. Cysteine 404, cysteine 407, cysteine 422, and cysteine 427 together coordinate Zn(2+). The BRCT domain occupies 590 to 668; that stretch reads DSDSYFAGKT…EEQLMGELKK (79 aa).

Belongs to the NAD-dependent DNA ligase family. LigA subfamily. Mg(2+) serves as cofactor. It depends on Mn(2+) as a cofactor.

It catalyses the reaction NAD(+) + (deoxyribonucleotide)n-3'-hydroxyl + 5'-phospho-(deoxyribonucleotide)m = (deoxyribonucleotide)n+m + AMP + beta-nicotinamide D-nucleotide.. DNA ligase that catalyzes the formation of phosphodiester linkages between 5'-phosphoryl and 3'-hydroxyl groups in double-stranded DNA using NAD as a coenzyme and as the energy source for the reaction. It is essential for DNA replication and repair of damaged DNA. This is DNA ligase from Bacillus subtilis (strain 168).